The sequence spans 1255 residues: MNGYAEFPPSPSNPTKEPVEPQPSQVPLQEDVDMSSGSSGHETNENCSTGRDSQGSDCDDSGKELGMLVEPPDARQSPDTFSLMMAKSEHNPSTSGCSSDQSSKVDTHKELIKTLKELKVHLPADKKAKGKASTLATLKYALRSVKQVKANEEYYQLLMSSEGHPCGADVPSYTVEEMESVTSEHIVKNADMFAVAVSLVSGKILYISDQVASIFHCKRDAFSDAKFVEFLAPHDVGVFHSFTSPYKLPLWSMCSGADSFTQECMEEKSFFCRVSVRKSHENEIRYHPFRMTPYLVKVRDQQGAESQLCCLLLAERVHSGYEAPRIPPEKRIFTTTHTPNCLFQDVDERAVPLLGYLPQDLIETPVLVQLHPSDRPLMLAIHKKILQSGGQPFDYSPIRFRARNGEYITLDTSWSSFINPWSRKISFIIGRHKVRVGPLNEDVFAAHPCTEEKALHPSIQELTEQIHRLLLQPVPHSGSSGYGSLGSNGSHEHLMSQTSSSDSNGHEDSRRRRAEICKNGNKTKNRSHYSHESGEQKKKSVTEMQTNPPAEKKAVPAMEKDSLGVSFPEELACKNQPTCSYQQISCLDSVIRYLESCNEAATLKRKCEFPANVPALRSSDKRKATVSPGPHAGEAEPPSRVNSRTGVGTHLTSLALPGKAESVASLTSQCSYSSTIVHVGDKKPQPELEMVEDAASGPESLDCLAGPALACGLSQEKEPFKKLGLTKEVLAAHTQKEEQSFLQKFKEIRKLSIFQSHCHYYLQERSKGQPSERTAPGLRNTSGIDSPWKKTGKNRKLKSKRVKPRDSSESTGSGGPVSARPPLVGLNATAWSPSDTSQSSCPAVPFPAPVPAAYSLPVFPAPGTVAAPPAPPHASFTVPAVPVDLQHQFAVQPPPFPAPLAPVMAFMLPSYSFPSGTPNLPQAFFPSQPQFPSHPTLTSEMASASQPEFPSRTSIPRQPCACPATRATPPSAMGRASPPLFQSRSSSPLQLNLLQLEEAPEGGTGAMGTTGATETAAVGADCKPGTSRDQQPKAPLTRDEPSDTQNSDALSTSSGLLNLLLNEDLCSASGSAASESLGSGSLGCDASPSGAGSSDTSHTSKYFGSIDSSENNHKAKMNTGMEESEHFIKCVLQDPIWLLMADADSSVMMTYQLPSRNLEAVLKEDREKLKLLQKLQPRFTESQKQELREVHQWMQTGGLPAAIDVAECVYCENKEKGNICIPYEEDIPSLGLSEVSDTKEDENGSPLNHRIEEQT.

The tract at residues 1–79 (MNGYAEFPPS…EPPDARQSPD (79 aa)) is disordered. Over residues 35 to 56 (SSGSSGHETNENCSTGRDSQGS) the composition is skewed to polar residues. Positions 111-120 (LIKTLKELKV) match the Nuclear export signal 1 motif. A PAS 1 domain is found at 181–248 (VTSEHIVKNA…FHSFTSPYKL (68 aa)). The LXXLL signature appears at 308-312 (LCCLL). The PAS 2 domain occupies 321-387 (YEAPRIPPEK…MLAIHKKILQ (67 aa)). Residues 395–438 (YSPIRFRARNGEYITLDTSWSSFINPWSRKISFIIGRHKVRVGP) enclose the PAC domain. The Nuclear export signal 2 signature appears at 462 to 471 (LTEQIHRLLL). Disordered regions lie at residues 473-557 (PVPH…AVPA) and 617-646 (RSSD…SRTG). Positions 480–484 (SGYGS) are important for protein stability. Basic and acidic residues predominate over residues 504–516 (NGHEDSRRRRAEI). The tract at residues 512 to 717 (RRAEICKNGN…ALACGLSQEK (206 aa)) is CSNK1E binding domain. A phosphoserine mark is found at Ser-527, Ser-530, Ser-533, and Ser-540. The span at 529–541 (YSHESGEQKKKSV) shows a compositional bias: basic and acidic residues. Ser-662, Ser-696, Ser-700, Ser-714, Ser-766, and Ser-771 each carry phosphoserine. Disordered regions lie at residues 764–838 (ERSK…DTSQ) and 931–985 (FPSH…QSRS). The Nuclear localization signal signature appears at 789–805 (KKTGKNRKLKSKRVKPR). A compositionally biased stretch (basic residues) spans 790 to 803 (KTGKNRKLKSKRVK). Composition is skewed to polar residues over residues 829–838 (TAWSPSDTSQ) and 936–956 (TLTS…TSIP). The tract at residues 888–1071 (QFAVQPPPFP…NEDLCSASGS (184 aa)) is interaction with PPARG. Ser-945 is subject to Phosphoserine. Over residues 959–972 (PCACPATRATPPSA) the composition is skewed to low complexity. Ser-977 is modified (phosphoserine). The Nuclear export signal 3 signature appears at 989 to 996 (LQLNLLQL). The segment at 1018 to 1050 (VGADCKPGTSRDQQPKAPLTRDEPSDTQNSDAL) is disordered. Positions 1057–1061 (LNLLL) match the LXXLL motif. The tract at residues 1077 to 1106 (LGSGSLGCDASPSGAGSSDTSHTSKYFGSI) is disordered. Residues 1090-1106 (GAGSSDTSHTSKYFGSI) show a composition bias toward polar residues. Phosphoserine is present on Ser-1124. The interval 1155–1255 (SRNLEAVLKE…PLNHRIEEQT (101 aa)) is CRY binding domain. Positions 1231–1255 (GLSEVSDTKEDENGSPLNHRIEEQT) are disordered.

Homodimer. Component of the circadian core oscillator, which includes the CRY proteins, CLOCK or NPAS2, BMAL1 or BMAL2, CSNK1D and/or CSNK1E, TIMELESS, and the PER proteins. Interacts with CLOCK-BMAL1 (off DNA). Interacts with BMAL2. Interacts directly with PER1 and PER3, and through a C-terminal domain, with CRY1 and CRY2. Interacts (via PAS 2 domain) with TIMELESS. Interacts with NFIL3. Different large complexes have been identified with different repressive functions. The core of PER complexes is composed of at least PER1, PER2, PER3, CRY1, CRY2, CSNK1D and/or CSNK1E. The large PER complex involved in the repression of transcriptional termination is composed of at least PER2, CDK9, DDX5, DHX9, NCBP1 and POLR2A (active). The large PER complex involved in the histone deacetylation is composed of at least HDAC1, PER2, SFPQ and SIN3A. The large PER complex involved in the histone methylation is composed of at least PER2, CBX3, TRIM28, SUV39H1 and/or SUV39H2; CBX3 mediates the formation of the complex. Interacts with SETX; the interaction inhibits termination of circadian target genes. Interacts with the nuclear receptors HNF4A, NR1D1, NR4A2, RORA, PPARA, PPARG and THRA; the interaction with at least PPARG is ligand dependent. Interacts with PML. Interacts (phosphorylated) with BTRC and FBXW11; the interactions trigger proteasomal degradation. Interacts with NONO and SFPQ. Interacts with CAVIN3. Interacts with MAGEL2. Interacts with MAP1LC3B. Interacts with HNF4A. In terms of processing, acetylated. Deacetylated by SIRT1, resulting in decreased protein stability. Deacetylated by SIRT6, preventing its degradation by the proteasome, resulting in increased protein stability. Phosphorylated by CSNK1E and CSNK1D. Phosphorylation results in PER2 protein degradation. May be dephosphorylated by PP1. Post-translationally, ubiquitinated, leading to its proteasomal degradation. Ubiquitination may be inhibited by CRY1. Widely expressed. Found in heart, brain, placenta, lung, liver, skeleatal muscle, kidney and pancreas. High levels in skeletal muscle and pancreas. Low levels in lung. Isoform 2 is expressed in keratinocytes (at protein level).

It localises to the nucleus. The protein resides in the cytoplasm. Its subcellular location is the perinuclear region. It is found in the nucleolus. Its function is as follows. Transcriptional repressor which forms a core component of the circadian clock. The circadian clock, an internal time-keeping system, regulates various physiological processes through the generation of approximately 24 hour circadian rhythms in gene expression, which are translated into rhythms in metabolism and behavior. It is derived from the Latin roots 'circa' (about) and 'diem' (day) and acts as an important regulator of a wide array of physiological functions including metabolism, sleep, body temperature, blood pressure, endocrine, immune, cardiovascular, and renal function. Consists of two major components: the central clock, residing in the suprachiasmatic nucleus (SCN) of the brain, and the peripheral clocks that are present in nearly every tissue and organ system. Both the central and peripheral clocks can be reset by environmental cues, also known as Zeitgebers (German for 'timegivers'). The predominant Zeitgeber for the central clock is light, which is sensed by retina and signals directly to the SCN. The central clock entrains the peripheral clocks through neuronal and hormonal signals, body temperature and feeding-related cues, aligning all clocks with the external light/dark cycle. Circadian rhythms allow an organism to achieve temporal homeostasis with its environment at the molecular level by regulating gene expression to create a peak of protein expression once every 24 hours to control when a particular physiological process is most active with respect to the solar day. Transcription and translation of core clock components (CLOCK, NPAS2, BMAL1, BMAL2, PER1, PER2, PER3, CRY1 and CRY2) plays a critical role in rhythm generation, whereas delays imposed by post-translational modifications (PTMs) are important for determining the period (tau) of the rhythms (tau refers to the period of a rhythm and is the length, in time, of one complete cycle). A diurnal rhythm is synchronized with the day/night cycle, while the ultradian and infradian rhythms have a period shorter and longer than 24 hours, respectively. Disruptions in the circadian rhythms contribute to the pathology of cardiovascular diseases, cancer, metabolic syndrome and aging. A transcription/translation feedback loop (TTFL) forms the core of the molecular circadian clock mechanism. Transcription factors, CLOCK or NPAS2 and BMAL1 or BMAL2, form the positive limb of the feedback loop, act in the form of a heterodimer and activate the transcription of core clock genes and clock-controlled genes (involved in key metabolic processes), harboring E-box elements (5'-CACGTG-3') within their promoters. The core clock genes: PER1/2/3 and CRY1/2 which are transcriptional repressors form the negative limb of the feedback loop and interact with the CLOCK|NPAS2-BMAL1|BMAL2 heterodimer inhibiting its activity and thereby negatively regulating their own expression. This heterodimer also activates nuclear receptors NR1D1/2 and RORA/B/G, which form a second feedback loop and which activate and repress BMAL1 transcription, respectively. PER1 and PER2 proteins transport CRY1 and CRY2 into the nucleus with appropriate circadian timing, but also contribute directly to repression of clock-controlled target genes through interaction with several classes of RNA-binding proteins, helicases and others transcriptional repressors. PER appears to regulate circadian control of transcription by at least three different modes. First, interacts directly with the CLOCK-BMAL1 at the tail end of the nascent transcript peak to recruit complexes containing the SIN3-HDAC that remodel chromatin to repress transcription. Second, brings H3K9 methyltransferases such as SUV39H1 and SUV39H2 to the E-box elements of the circadian target genes, like PER2 itself or PER1. The recruitment of each repressive modifier to the DNA seems to be very precisely temporally orchestrated by the large PER complex, the deacetylases acting before than the methyltransferases. Additionally, large PER complexes are also recruited to the target genes 3' termination site through interactions with RNA-binding proteins and helicases that may play a role in transcription termination to regulate transcription independently of CLOCK-BMAL1 interactions. Recruitment of large PER complexes to the elongating polymerase at PER and CRY termination sites inhibited SETX action, impeding RNA polymerase II release and thereby repressing transcriptional reinitiation. May propagate clock information to metabolic pathways via the interaction with nuclear receptors. Coactivator of PPARA and corepressor of NR1D1, binds rhythmically at the promoter of nuclear receptors target genes like BMAL1 or G6PC1. Directly and specifically represses PPARG proadipogenic activity by blocking PPARG recruitment to target promoters and thereby inhibiting transcriptional activation. Required for fatty acid and lipid metabolism, is involved as well in the regulation of circulating insulin levels. Plays an important role in the maintenance of cardiovascular functions through the regulation of NO and vasodilatatory prostaglandins production in aortas. Controls circadian glutamate uptake in synaptic vesicles through the regulation of VGLUT1 expression. May also be involved in the regulation of inflammatory processes. Represses the CLOCK-BMAL1 induced transcription of BHLHE40/DEC1 and ATF4. Negatively regulates the formation of the TIMELESS-CRY1 complex by competing with TIMELESS for binding to CRY1. The chain is Period circadian protein homolog 2 (PER2) from Homo sapiens (Human).